A 336-amino-acid chain; its full sequence is Aspartate--ammonia ligase (336 aa).

The protein belongs to the class-II aminoacyl-tRNA synthetase family. AsnA subfamily.

The protein localises to the cytoplasm. It carries out the reaction L-aspartate + NH4(+) + ATP = L-asparagine + AMP + diphosphate + H(+). It functions in the pathway amino-acid biosynthesis; L-asparagine biosynthesis; L-asparagine from L-aspartate (ammonia route): step 1/1. The protein is Aspartate--ammonia ligase of Clostridium perfringens (strain 13 / Type A).